A 443-amino-acid chain; its full sequence is Autophagy-related protein 13 homolog (443 aa).

Disordered regions lie at residues 232–283 (AKKR…EEDH) and 308–333 (ANGTKKNSSSTCLNSPKSTPEDKEPT). Over residues 240–253 (SVESATSAGSSTSR) the composition is skewed to polar residues. A compositionally biased stretch (basic and acidic residues) spans 268–283 (EDSRHSDVQNSYEEDH). The span at 308-325 (ANGTKKNSSSTCLNSPKS) shows a compositional bias: polar residues.

The protein belongs to the ATG13 family. Metazoan subfamily. As to quaternary structure, interacts with unc-51 (via C-terminus). Interacts with lgg-1; the interaction is direct.

Its subcellular location is the cytoplasm. It localises to the cytosol. The protein localises to the preautophagosomal structure. The protein resides in the perikaryon. It is found in the cell projection. Its subcellular location is the axon. Component of the unc-51/atg-13 complex required for autophagosome formation. Required for the degradation of germ cell specific P-granule components such as sepa-1 by autophagy in somatic cells. This ensures exclusive localization of the P-granules in germ cells. May function downstream of the let-363 (Tor) signaling pathway to mediate sepa-1 degradation. Plays a role in survival during limited food availability. In Caenorhabditis elegans, this protein is Autophagy-related protein 13 homolog.